The following is a 172-amino-acid chain: Adenine phosphoribosyltransferase (172 aa).

The protein belongs to the purine/pyrimidine phosphoribosyltransferase family. Homodimer.

It localises to the cytoplasm. It catalyses the reaction AMP + diphosphate = 5-phospho-alpha-D-ribose 1-diphosphate + adenine. The protein operates within purine metabolism; AMP biosynthesis via salvage pathway; AMP from adenine: step 1/1. In terms of biological role, catalyzes a salvage reaction resulting in the formation of AMP, that is energically less costly than de novo synthesis. The sequence is that of Adenine phosphoribosyltransferase from Exiguobacterium sp. (strain ATCC BAA-1283 / AT1b).